We begin with the raw amino-acid sequence, 329 residues long: Acetyl-coenzyme A carboxylase carboxyl transferase subunit alpha (329 aa).

The 255-residue stretch at 40 to 294 (QLETLAARRR…KNALEKHLSE (255 aa)) folds into the CoA carboxyltransferase C-terminal domain.

The protein belongs to the AccA family. In terms of assembly, acetyl-CoA carboxylase is a heterohexamer composed of biotin carboxyl carrier protein (AccB), biotin carboxylase (AccC) and two subunits each of ACCase subunit alpha (AccA) and ACCase subunit beta (AccD).

Its subcellular location is the cytoplasm. It catalyses the reaction N(6)-carboxybiotinyl-L-lysyl-[protein] + acetyl-CoA = N(6)-biotinyl-L-lysyl-[protein] + malonyl-CoA. It functions in the pathway lipid metabolism; malonyl-CoA biosynthesis; malonyl-CoA from acetyl-CoA: step 1/1. Functionally, component of the acetyl coenzyme A carboxylase (ACC) complex. First, biotin carboxylase catalyzes the carboxylation of biotin on its carrier protein (BCCP) and then the CO(2) group is transferred by the carboxyltransferase to acetyl-CoA to form malonyl-CoA. The protein is Acetyl-coenzyme A carboxylase carboxyl transferase subunit alpha of Prochlorococcus marinus (strain NATL1A).